The following is a 149-amino-acid chain: Transcription factor bHLH153 (149 aa).

One can recognise a bHLH domain in the interval 27-76; it reads RHKSDLSFSSKERKDKVGERISALQQIVSPYGKTDTASVLLDAMHYIEFL.

It belongs to the bHLH protein family.

The protein resides in the nucleus. The polypeptide is Transcription factor bHLH153 (Arabidopsis thaliana (Mouse-ear cress)).